The sequence spans 389 residues: Chalcone synthase (389 aa).

Residue C164 is part of the active site.

It belongs to the thiolase-like superfamily. Chalcone/stilbene synthases family.

It carries out the reaction (E)-4-coumaroyl-CoA + 3 malonyl-CoA + 3 H(+) = 2',4,4',6'-tetrahydroxychalcone + 3 CO2 + 4 CoA. It participates in secondary metabolite biosynthesis; flavonoid biosynthesis. Its function is as follows. The primary product of this enzyme is 4,2',4',6'-tetrahydroxychalcone (also termed naringenin-chalcone or chalcone) which can under specific conditions spontaneously isomerize into naringenin. This chain is Chalcone synthase (CHS1), found in Casuarina glauca (Swamp oak).